Here is a 340-residue protein sequence, read N- to C-terminus: Glyceraldehyde-3-phosphate dehydrogenase, cytosolic (340 aa).

NAD(+)-binding positions include 16–17 (RI), D38, and R85. Residues 156-158 (SCT), T187, 216-217 (TG), and R239 each bind D-glyceraldehyde 3-phosphate. The active-site Nucleophile is C157. N321 serves as a coordination point for NAD(+).

This sequence belongs to the glyceraldehyde-3-phosphate dehydrogenase family. In terms of assembly, homotetramer.

It localises to the cytoplasm. It catalyses the reaction D-glyceraldehyde 3-phosphate + phosphate + NAD(+) = (2R)-3-phospho-glyceroyl phosphate + NADH + H(+). It participates in carbohydrate degradation; glycolysis; pyruvate from D-glyceraldehyde 3-phosphate: step 1/5. Key enzyme in glycolysis that catalyzes the first step of the pathway by converting D-glyceraldehyde 3-phosphate (G3P) into 3-phospho-D-glyceroyl phosphate. Essential for the maintenance of cellular ATP levels and carbohydrate metabolism. This is Glyceraldehyde-3-phosphate dehydrogenase, cytosolic (GAPC) from Pinus sylvestris (Scotch pine).